The primary structure comprises 289 residues: Splicing factor C9orf78 (289 aa).

The segment covering 1 to 12 has biased composition (basic residues); that stretch reads MPVVRKIFRRRR. The interval 1–27 is disordered; it reads MPVVRKIFRRRRGDSESEEDEQDSEEV. The segment at 5 to 58 is interaction with SNRNP200; sequence RKIFRRRRGDSESEEDEQDSEEVRLKLEETREVQNLRKRPNGVSAVALLVGEKV. Phosphoserine occurs at positions 15 and 17. Tyr-147 bears the Phosphotyrosine mark. Positions 232 to 283 are enriched in basic and acidic residues; the sequence is LNAPIRRNKEEPKARPLRVGDTEKPEPERSPPNRKRPANEKATDDYHYEKFK. The tract at residues 232–289 is disordered; it reads LNAPIRRNKEEPKARPLRVGDTEKPEPERSPPNRKRPANEKATDDYHYEKFKKMNRRY. Thr-253 carries the post-translational modification Phosphothreonine. Ser-261 is modified (phosphoserine).

Belongs to the TLS1 family. In terms of assembly, component of the spliceosome. Interacts with SNRNP200; the interaction is direct. Interacts with PRPF8.

Its subcellular location is the nucleus. The protein resides in the chromosome. The protein localises to the centromere. Functionally, plays a role in pre-mRNA splicing by promoting usage of the upstream 3'-splice site at alternative NAGNAG splice sites; these are sites featuring alternative acceptor motifs separated by only a few nucleotides. May also modulate exon inclusion events. Plays a role in spliceosomal remodeling by displacing WBP4 from SNRNP200 and may act to inhibit SNRNP200 helicase activity. Binds U5 snRNA. Required for proper chromosome segregation. Not required for splicing of shelterin components. In Homo sapiens (Human), this protein is Splicing factor C9orf78 (C9orf78).